Reading from the N-terminus, the 244-residue chain is Prolactin-7D1 (244 aa).

The signal sequence occupies residues 1 to 30 (MLPSLIQPCSSGTLLMLLMSNLFLWEKVSS). 2 cysteine pairs are disulfide-bonded: cysteine 99–cysteine 215 and cysteine 232–cysteine 240.

Belongs to the somatotropin/prolactin family.

Its subcellular location is the secreted. The protein is Prolactin-7D1 (Prl7d1) of Mus musculus (Mouse).